A 305-amino-acid polypeptide reads, in one-letter code: Probable aspartoacylase (305 aa).

Zn(2+)-binding residues include histidine 13 and glutamate 16. Residues arginine 55 and 62-63 contribute to the substrate site; that span reads NR. Position 105 (histidine 105) interacts with Zn(2+). Residues glutamate 163 and tyrosine 273 each coordinate substrate.

The protein belongs to the AspA/AstE family. Aspartoacylase subfamily. Zn(2+) serves as cofactor.

It catalyses the reaction an N-acyl-L-aspartate + H2O = a carboxylate + L-aspartate. The protein is Probable aspartoacylase of Prochlorococcus marinus (strain NATL1A).